We begin with the raw amino-acid sequence, 447 residues long: Glutamate--tRNA ligase 1 (447 aa).

A 'HIGH' region motif is present at residues 10-20; the sequence is PSPTGMLHVGN. A 'KMSKS' region motif is present at residues 240–244; the sequence is KISKR. K243 contacts ATP.

Belongs to the class-I aminoacyl-tRNA synthetase family. Glutamate--tRNA ligase type 1 subfamily. In terms of assembly, monomer.

Its subcellular location is the cytoplasm. It carries out the reaction tRNA(Glu) + L-glutamate + ATP = L-glutamyl-tRNA(Glu) + AMP + diphosphate. Its function is as follows. Catalyzes the attachment of glutamate to tRNA(Glu) in a two-step reaction: glutamate is first activated by ATP to form Glu-AMP and then transferred to the acceptor end of tRNA(Glu). The polypeptide is Glutamate--tRNA ligase 1 (Rickettsia prowazekii (strain Madrid E)).